Here is a 919-residue protein sequence, read N- to C-terminus: Calcium-activated chloride channel regulator 4 (919 aa).

A signal peptide spans 1-21; the sequence is MGLFRGFVFLLVLCLLHQSNT. Residues 45–199 are metalloprotease domain; that stretch reads DEKIIEQIED…GISGRNRVYK (155 aa). Asparagine 75 is a glycosylation site (N-linked (GlcNAc...) asparagine). Position 155 (histidine 155) interacts with Zn(2+). The active site involves glutamate 156. Residues histidine 159 and aspartate 166 each contribute to the Zn(2+) site. The VWFA domain maps to 306 to 476; the sequence is IVCLVLDKSG…NGLIDAFGAL (171 aa). N-linked (GlcNAc...) asparagine glycans are attached at residues asparagine 340, asparagine 504, asparagine 542, asparagine 588, asparagine 628, asparagine 811, asparagine 832, asparagine 837, and asparagine 852. A disordered region spans residues 870 to 893; sequence ANPDDIDPTPTPTPTPTPDKSHNS. The chain crosses the membrane as a helical span at residues 895–915; the sequence is VNISTLVLSVIGSVVIVNFIL.

It belongs to the CLCR family. Post-translationally, the translation product is autoproteolytically cleaved by the metalloprotease domain in the endoplasmic reticulum into a N-terminal and a C-terminal products that remain physically associated with each other. The cleavage is necessary for calcium-activated chloride channel (CaCC) activation activity. As to expression, primarily expressed in the digestive tract, mainly in colon. Detected in smaller amounts in brain, urogenital organs, testis, and salivary and mammary glands. Highly expressed in the epithelial layer and submucosal gland of the inferior turbinate mucosa. Lower levels in the epithelial layer of nasal polyp.

The protein localises to the cell membrane. It localises to the apical cell membrane. Its subcellular location is the secreted. Its function is as follows. May be involved in mediating calcium-activated chloride conductance. The protein is Calcium-activated chloride channel regulator 4 (CLCA4) of Homo sapiens (Human).